The chain runs to 601 residues: Phosphomethylpyrimidine synthase (601 aa).

2 disordered regions span residues 1–31 (MTNK…GKSI) and 100–141 (AGRP…RDGQ). Positions 100-112 (AGRPVRPEDDGIK) are enriched in basic and acidic residues. Residues asparagine 208, methionine 237, tyrosine 266, histidine 302, 322–324 (SRG), 363–366 (DGLR), and glutamate 402 each bind substrate. Histidine 406 contributes to the Zn(2+) binding site. Tyrosine 429 is a substrate binding site. Histidine 470 is a Zn(2+) binding site. [4Fe-4S] cluster contacts are provided by cysteine 550, cysteine 553, and cysteine 558.

It belongs to the ThiC family. [4Fe-4S] cluster serves as cofactor.

It catalyses the reaction 5-amino-1-(5-phospho-beta-D-ribosyl)imidazole + S-adenosyl-L-methionine = 4-amino-2-methyl-5-(phosphooxymethyl)pyrimidine + CO + 5'-deoxyadenosine + formate + L-methionine + 3 H(+). It participates in cofactor biosynthesis; thiamine diphosphate biosynthesis. In terms of biological role, catalyzes the synthesis of the hydroxymethylpyrimidine phosphate (HMP-P) moiety of thiamine from aminoimidazole ribotide (AIR) in a radical S-adenosyl-L-methionine (SAM)-dependent reaction. The chain is Phosphomethylpyrimidine synthase from Streptomyces avermitilis (strain ATCC 31267 / DSM 46492 / JCM 5070 / NBRC 14893 / NCIMB 12804 / NRRL 8165 / MA-4680).